The chain runs to 172 residues: Translation initiation factor IF-3 (172 aa).

This sequence belongs to the IF-3 family. Monomer.

The protein resides in the cytoplasm. Its function is as follows. IF-3 binds to the 30S ribosomal subunit and shifts the equilibrium between 70S ribosomes and their 50S and 30S subunits in favor of the free subunits, thus enhancing the availability of 30S subunits on which protein synthesis initiation begins. This chain is Translation initiation factor IF-3, found in Campylobacter jejuni subsp. jejuni serotype O:6 (strain 81116 / NCTC 11828).